A 236-amino-acid polypeptide reads, in one-letter code: GLIPR1-like protein 1 (236 aa).

The signal sequence occupies residues 1–27 (MALKKKLNFLWTLVLYLIASRLPKAFG). Residues 46–178 (LNIHNELRRK…FSAGLFVCNY (133 aa)) enclose the SCP domain. N-linked (GlcNAc...) asparagine glycosylation is present at N126.

Belongs to the CRISP family. In terms of assembly, part of a oolemmal binding multimeric complex (IZUMO1 complex) composed at least of IZUMO1 and GLIPR1L1; the complex assemblage is influenced by the maturation status of the male germ cell. Interacts with IZUMO1. N-glycosylated. N-glycosylation decreases during the transit in the caput. In terms of tissue distribution, expressed in testis (at protein level). Little or no expression in other tissues tested.

Its subcellular location is the cytoplasmic vesicle. The protein localises to the secretory vesicle. It is found in the acrosome. It localises to the cell membrane. The protein resides in the membrane raft. Its subcellular location is the secreted. In terms of biological role, required for optimal fertilization at the stage of sperm-oocyte fusion, plays a role in optimizing acrosome function, the translocation of IZUMO1 during the acrosome reaction and the fertilization process. Component of epididymosomes, one type of membranous microvesicules which mediate the transfer of lipids and proteins to spermatozoa plasma membrane during epididymal maturation. Also component of the CD9-positive microvesicules found in the cauda region. In Mus musculus (Mouse), this protein is GLIPR1-like protein 1.